The following is a 523-amino-acid chain: Putative glucosylceramidase 1 (523 aa).

An N-terminal signal peptide occupies residues 1–23 (MKSRFLLKIFIFLAVFGVDSVRA). N-linked (GlcNAc...) asparagine glycosylation is present at N168. The active-site Nucleophile is the E358.

It belongs to the glycosyl hydrolase 30 family.

It catalyses the reaction a beta-D-glucosylceramide + H2O = an N-acyl-sphingoid base + D-glucose. The catalysed reaction is a beta-D-glucosyl-(1&lt;-&gt;1')-N-acylsphing-4-enine + H2O = an N-acylsphing-4-enine + D-glucose. The enzyme catalyses an N-acyl-1-beta-D-glucosyl-15-methylhexadecasphing-4-enine + H2O = an N-acyl-15-methylhexadecasphing-4-enine + D-glucose. It participates in lipid metabolism; sphingolipid metabolism. Glucosylceramidase that catalyzes the hydrolysis of glucosylceramides into free ceramides and glucose. C.elegans contains specific sphingoid bases, which are unique or different in structure compared to the sphingoid bases found in other animals. Two examples of these distinctive compounds are: 15-methylhexadecasphinganine and 15-methylhexadecasphing-4-enine. This is Putative glucosylceramidase 1 (gba-1) from Caenorhabditis elegans.